A 324-amino-acid chain; its full sequence is Ribosomal lysine N-methyltransferase 5 (324 aa).

Residues Trp-90, 140–142, Asp-162, Trp-217, and Met-247 each bind S-adenosyl-L-methionine; that span reads GSG.

Belongs to the class I-like SAM-binding methyltransferase superfamily. RKM5 family.

Functionally, S-adenosyl-L-methionine-dependent protein-lysine N-methyltransferase that methylates 60S ribosomal protein L1. In Vanderwaltozyma polyspora (strain ATCC 22028 / DSM 70294 / BCRC 21397 / CBS 2163 / NBRC 10782 / NRRL Y-8283 / UCD 57-17) (Kluyveromyces polysporus), this protein is Ribosomal lysine N-methyltransferase 5 (RKM5).